The primary structure comprises 473 residues: uncharacterized protein (473 aa).

Residues 1–19 (MIRAFLVFPYLYILVQSNG) form the signal peptide.

This is an uncharacterized protein from Methanocaldococcus jannaschii (strain ATCC 43067 / DSM 2661 / JAL-1 / JCM 10045 / NBRC 100440) (Methanococcus jannaschii).